Reading from the N-terminus, the 639-residue chain is Chaperone protein DnaK (639 aa).

A Phosphothreonine; by autocatalysis modification is found at Thr-198. Positions 603-618 (AKAQTQGGAQEGAAKQ) are enriched in low complexity. The interval 603 to 639 (AKAQTQGGAQEGAAKQSNATADDVVDAEFEEVKDDKK) is disordered. The span at 625–639 (DVVDAEFEEVKDDKK) shows a compositional bias: acidic residues.

This sequence belongs to the heat shock protein 70 family.

Acts as a chaperone. This chain is Chaperone protein DnaK, found in Shewanella oneidensis (strain ATCC 700550 / JCM 31522 / CIP 106686 / LMG 19005 / NCIMB 14063 / MR-1).